A 272-amino-acid chain; its full sequence is MTRQWEILREYDEIKYEFFEGIAKVTINRPEVRNAFTPKTVAEMIDAFSRARDDQNVSVIVLTGEGDKAFCSGGDQKKRGHGGYVGEDDIPRLNVLDLQRLIRVIPKPVIAMVRGYAIGGGNVLNVVCDLTIAADNAIFGQTGPKVGSFDAGYGSGYLARIVGHKKAREIWYLCRQYNAQEALDMGLVNTVVPLEQVEDETVKWCKDIMQHSPTALRFLKAAMNADTDGLAGLQQMAGDATLLYYTTDEAKEGRDAFKEKRNPDFDQFPKFP.

Substrate is bound by residues R33, 72 to 76 (SGGDQ), Y84, 116 to 120 (YAIGG), T142, S148, Y245, and K260. Hydrogencarbonate is bound at residue 141 to 143 (QTG).

Belongs to the enoyl-CoA hydratase/isomerase family. MenB subfamily. Requires hydrogencarbonate as cofactor.

It carries out the reaction 2-succinylbenzoyl-CoA + H(+) = 1,4-dihydroxy-2-naphthoyl-CoA + H2O. It participates in quinol/quinone metabolism; 1,4-dihydroxy-2-naphthoate biosynthesis; 1,4-dihydroxy-2-naphthoate from chorismate: step 6/7. It functions in the pathway quinol/quinone metabolism; menaquinone biosynthesis. Functionally, converts o-succinylbenzoyl-CoA (OSB-CoA) to 1,4-dihydroxy-2-naphthoyl-CoA (DHNA-CoA). In Staphylococcus epidermidis (strain ATCC 12228 / FDA PCI 1200), this protein is 1,4-dihydroxy-2-naphthoyl-CoA synthase.